Consider the following 443-residue polypeptide: Probable glutamate dehydrogenase (443 aa).

Lys86 is a catalytic residue.

This sequence belongs to the Glu/Leu/Phe/Val dehydrogenases family.

It catalyses the reaction L-glutamate + NAD(+) + H2O = 2-oxoglutarate + NH4(+) + NADH + H(+). It carries out the reaction L-glutamate + NADP(+) + H2O = 2-oxoglutarate + NH4(+) + NADPH + H(+). The protein is Probable glutamate dehydrogenase of Sinorhizobium fredii (strain NBRC 101917 / NGR234).